Consider the following 350-residue polypeptide: Ribosomal RNA large subunit methyltransferase Cfr (350 aa).

Catalysis depends on E92, which acts as the Proton acceptor. One can recognise a Radical SAM core domain in the interval 99-333 (EAGWESFCIS…VTIRSQFGRE (235 aa)). A disulfide bond links C106 and C338. 3 residues coordinate [4Fe-4S] cluster: C113, C117, and C120. S-adenosyl-L-methionine is bound by residues 159-160 (GE), S190, 213-215 (SLH), and N293. The active-site S-methylcysteine intermediate is the C338.

Belongs to the radical SAM superfamily. RlmN family. Cfr subfamily. The cofactor is [4Fe-4S] cluster.

Its subcellular location is the cytoplasm. It carries out the reaction adenosine(2503) in 23S rRNA + 2 reduced [2Fe-2S]-[ferredoxin] + 2 S-adenosyl-L-methionine = 8-methyladenosine(2503) in 23S rRNA + 5'-deoxyadenosine + L-methionine + 2 oxidized [2Fe-2S]-[ferredoxin] + S-adenosyl-L-homocysteine. Specifically methylates position 8 of adenine 2503 in 23S rRNA. Confers resistance to some classes of antibiotics. The chain is Ribosomal RNA large subunit methyltransferase Cfr from Shouchella clausii (strain KSM-K16) (Alkalihalobacillus clausii).